A 555-amino-acid chain; its full sequence is Transcription factor kojR (555 aa).

The segment at residues 21–47 (CETCKLRKRKCDGHEPCTYCLRYEYQC) is a DNA-binding region (zn(2)-C6 fungal-type). A disordered region spans residues 51-73 (PHPRRKPAASKSSARPSEEEDSP).

The protein resides in the nucleus. Transcription factor that regulates the gene cluster that mediates the biosynthesis of 5-hydroxy-2-hydroxymethyl-1,4-pyrone, also know as kojic acid, a by-product in the fermentation process of malting rice that acts as a chelation agent. Mediates the expression of kojA and kojT via binding of an 11-nucleotide palindromic sequence, 5'-CGRCTWAGYCG-3' (R=A/G, W=A/T, Y=C/T) within the target gene promoters. The chain is Transcription factor kojR from Aspergillus flavus (strain ATCC 200026 / FGSC A1120 / IAM 13836 / NRRL 3357 / JCM 12722 / SRRC 167).